The primary structure comprises 991 residues: Toll-like receptor 13 (991 aa).

A signal peptide spans 1–68; that stretch reads MSGLYRILVQ…GFSLPPVAET (68 aa). At 69 to 783 the chain is on the extracellular side; that stretch reads YGFNKCTQYE…DAMCNFDLGK (715 aa). N93, N109, and N125 each carry an N-linked (GlcNAc...) asparagine glycan. 25 LRR repeats span residues 104–125, 128–149, 152–174, 175–196, 199–220, 225–246, 248–268, 271–292, 295–315, 318–338, 348–368, 372–394, 397–418, 421–442, 445–466, 469–490, 493–514, 517–538, 541–562, 565–585, 594–617, 620–641, 644–665, 672–693, and 696–716; these read YTTHLNLTHNEIQVLPPWSFTN, ALVDLRLEWNSIWKIDEGAFRG, NLTLLNLVENKIQSVNNSFEGLS, SLKTLLLSHNQITHIHKDAFTP, KLKYLSLSRNNISDFSGILEAV, CLERLDLTNNSIMYLDHSPRSL, SLTHLSFEGNKLRELNFSALS, NLTNLSASRNGNKVIQNVYLKT, QLKSLNLSGTVIKLENLSAKH, NLRAMDLSNWELRHGHLDMKT, KLETLVFQKNVTNAEGIKQLA, RLLFLDLGQNSDLIYLNDSEFNA, SLQKLNLNKCQLSFINNRTWSS, NLTSLDLSHNKFKSFPDFAFSP, HLEFLSLSRNPITELNNLAFSG, ALKELNLAACWIVTIDRYSFTQ, NLEVLDLGDNNIRTLNHGTFRP, KLQSLILSHNCLKILEPNSFSG, NLRSLDLMYNSLSYFHEHLFSG, KLLILKLGFNKITYETTRTLQ, SLKQLNLEGQRHGIQVVPSNFFQG, SLQELLLGKNPSVFLDHHQFDP, NLTKLDISGTKDGDRSLYLNAS, RLKILRLENNNLESLVPDMFSS, and SLQVFSLRFNNLKVINQSHLK. 2 N-linked (GlcNAc...) asparagine glycosylation sites follow: N152 and N167. N-linked (GlcNAc...) asparagine glycosylation is found at N209, N233, N263, N271, N274, N300, and N310. N357, N388, N413, and N421 each carry an N-linked (GlcNAc...) asparagine glycan. N-linked (GlcNAc...) asparagine glycans are attached at residues N644 and N663. N-linked (GlcNAc...) asparagine glycosylation is found at N711 and N742. One can recognise an LRRCT domain in the interval 729 to 779; that stretch reads NKLQCTCDNLWFKNWSMNTEEVHIPFLRSYPCQQPGSQSLLIDFDDAMCNF. Residues 784–804 traverse the membrane as a helical segment; that stretch reads VYFLCSFSMVLSTMVFSWFST. The Cytoplasmic portion of the chain corresponds to 805–991; it reads KMIASLWYGL…KENTHLIVVE (187 aa). The region spanning 832-975 is the TIR domain; sequence FLYDAFVSFS…LFWARIRNAL (144 aa).

This sequence belongs to the Toll-like receptor family. In terms of assembly, binds MYD88 via their respective TIR domains. Interacts with UNC93B1.

Its subcellular location is the endosome membrane. Component of innate and adaptive immunity that recognizes and binds 23S rRNA from bacteria. TLRs (Toll-like receptors) control host immune response against pathogens through recognition of molecular patterns specific to microorganisms. Acts via MYD88 and TRAF6, leading to NF-kappa-B activation, cytokine secretion and the inflammatory response. Specifically binds the 5'-CGGAAAGACC-3' sequence on bacterial 23S rRNA, a sequence also bound by MLS group antibiotics (including erythromycin). May also recognize vesicular stomatitis virus; however, these data require additional evidences. This Mus musculus (Mouse) protein is Toll-like receptor 13 (Tlr13).